Here is a 163-residue protein sequence, read N- to C-terminus: Protein VASCULATURE COMPLEXITY AND CONNECTIVITY (163 aa).

The signal sequence occupies residues 1 to 27; that stretch reads MTKIGGILVCLVIVGLDVAAAILGIQA. 3 helical membrane-spanning segments follow: residues 54–74, 95–115, and 133–153; these read LGLGAAAILVMAHVLLNLVGG, MACLVLTWIVFAVGFGSIVIG, and FLSIGGILCFLHALFCVAYYV.

The protein belongs to the DESIGUAL family. As to quaternary structure, interacts with OPS. As to expression, expressed in vascular cells, mostly in hypocotyls, and, to a lower extent, in seedlings, roots, flowers, siliques, developing leaves and inflorescences, but barely in mature leaves and seeds. High levels in leaf primordia.

The protein resides in the endoplasmic reticulum membrane. Required, together with OPS, for embryo provasculature development and cotyledon vascular complexity and connectivity. Necessary, partially redundantly with DEAL2 and DEAL3, to ensure bilateral symmetry development and early leaf margin patterning, probably via the regulation of auxin and CUC2 distribution. Regulates cell proliferation but not cell expansion. In Arabidopsis thaliana (Mouse-ear cress), this protein is Protein VASCULATURE COMPLEXITY AND CONNECTIVITY.